A 133-amino-acid chain; its full sequence is Large-conductance mechanosensitive channel (133 aa).

2 helical membrane-spanning segments follow: residues 14 to 34 (VVDLAVGVVIGAAFGKIVSSL) and 67 to 87 (GNFIQTIFDFLIIAAAIFMFV).

The protein belongs to the MscL family. As to quaternary structure, homopentamer.

It is found in the cell membrane. Functionally, channel that opens in response to stretch forces in the membrane lipid bilayer. May participate in the regulation of osmotic pressure changes within the cell. This Bacillus cereus (strain AH187) protein is Large-conductance mechanosensitive channel.